The primary structure comprises 470 residues: Argininosuccinate synthase (470 aa).

ATP contacts are provided by residues 17–25 (AFSGGLDTS) and Ala-43. L-citrulline is bound at residue Tyr-99. ATP-binding residues include Gly-129 and Thr-131. The L-aspartate site is built by Thr-131, Asn-135, and Asp-136. Asn-135 provides a ligand contact to L-citrulline. Residue Asp-136 coordinates ATP. Residues Arg-139 and Ser-192 each contribute to the L-citrulline site. Asp-194 is an ATP binding site. Residues Thr-201, Glu-203, and Glu-280 each contribute to the L-citrulline site. Positions 448–470 (IASRGESSGDELLDRAAMESGTD) are disordered.

The protein belongs to the argininosuccinate synthase family. Type 2 subfamily. As to quaternary structure, homotetramer.

Its subcellular location is the cytoplasm. It catalyses the reaction L-citrulline + L-aspartate + ATP = 2-(N(omega)-L-arginino)succinate + AMP + diphosphate + H(+). The protein operates within amino-acid biosynthesis; L-arginine biosynthesis; L-arginine from L-ornithine and carbamoyl phosphate: step 2/3. The protein is Argininosuccinate synthase of Kineococcus radiotolerans (strain ATCC BAA-149 / DSM 14245 / SRS30216).